Reading from the N-terminus, the 124-residue chain is Small ribosomal subunit protein uS12 (124 aa).

Positions 1 to 23 (MATINQLVRKPRRSKVTKSNSAA) are disordered. A 3-methylthioaspartic acid modification is found at D89.

The protein belongs to the universal ribosomal protein uS12 family. As to quaternary structure, part of the 30S ribosomal subunit. Contacts proteins S8 and S17. May interact with IF1 in the 30S initiation complex.

In terms of biological role, with S4 and S5 plays an important role in translational accuracy. Interacts with and stabilizes bases of the 16S rRNA that are involved in tRNA selection in the A site and with the mRNA backbone. Located at the interface of the 30S and 50S subunits, it traverses the body of the 30S subunit contacting proteins on the other side and probably holding the rRNA structure together. The combined cluster of proteins S8, S12 and S17 appears to hold together the shoulder and platform of the 30S subunit. This chain is Small ribosomal subunit protein uS12, found in Pseudoalteromonas translucida (strain TAC 125).